Here is a 307-residue protein sequence, read N- to C-terminus: Protoheme IX farnesyltransferase (307 aa).

A run of 8 helical transmembrane segments spans residues 32–52 (MGIV…ALHF), 65–85 (FFTI…NNYI), 108–128 (PGFA…FLLL), 131–151 (PMAV…YSLW), 158–178 (LNTV…WAAI), 186–206 (IAWM…LALA), 251–271 (LGIT…VLGF), and 287–307 (FVYS…VTFF).

This sequence belongs to the UbiA prenyltransferase family. Protoheme IX farnesyltransferase subfamily. As to quaternary structure, interacts with CtaA.

It is found in the cell membrane. The enzyme catalyses heme b + (2E,6E)-farnesyl diphosphate + H2O = Fe(II)-heme o + diphosphate. It participates in porphyrin-containing compound metabolism; heme O biosynthesis; heme O from protoheme: step 1/1. In terms of biological role, converts heme B (protoheme IX) to heme O by substitution of the vinyl group on carbon 2 of heme B porphyrin ring with a hydroxyethyl farnesyl side group. The protein is Protoheme IX farnesyltransferase of Bacillus anthracis (strain A0248).